A 247-amino-acid polypeptide reads, in one-letter code: Probable transcriptional regulatory protein DVU_2259 (247 aa).

The segment at 1–22 (MAGHSKWANIQHRKGRQDAKRG) is disordered.

This sequence belongs to the TACO1 family.

Its subcellular location is the cytoplasm. The polypeptide is Probable transcriptional regulatory protein DVU_2259 (Nitratidesulfovibrio vulgaris (strain ATCC 29579 / DSM 644 / CCUG 34227 / NCIMB 8303 / VKM B-1760 / Hildenborough) (Desulfovibrio vulgaris)).